A 462-amino-acid polypeptide reads, in one-letter code: Spermatogenesis- and oogenesis-specific basic helix-loop-helix-containing protein 2 (462 aa).

The region spanning K200–V251 is the bHLH domain. Residues P422–F462 form a disordered region. A compositionally biased stretch (polar residues) spans G442–F462.

The protein resides in the nucleus. Probable transcription factor, which may be involved in spermatogenesis and oogenesis. This is Spermatogenesis- and oogenesis-specific basic helix-loop-helix-containing protein 2 (Sohlh2) from Rattus norvegicus (Rat).